Here is a 1045-residue protein sequence, read N- to C-terminus: Collagen alpha-1(VI) chain (1045 aa).

An N-terminal signal peptide occupies residues 1–24 (MKMLQGRLPLTVLHLFLLLGGGMT). The region spanning 65–255 (DIFFVLDTSE…LTDDEIDNTI (191 aa)) is the VWFA 1 domain. The tract at residues 277–613 (PSRGLSGPSG…GPPGPGGPPG (337 aa)) is disordered. Residues 280-540 (GLSGPSGPPG…RGDDGRPGNG (261 aa)) are triple-helical region. Residues 297-309 (PGLPGDRGLPGDP) are compositionally biased toward low complexity. Residues 327–360 (QGIRGEKGGRGAKGSKGDKGKRGIDGVDGQKGED) are compositionally biased toward basic and acidic residues. A compositionally biased stretch (low complexity) spans 375–392 (DGAPGSSGPKGDPGPYGT). Residues 400-409 (GTPGTGGRPG) are compositionally biased toward gly residues. 2 short sequence motifs (cell attachment site) span residues 501–503 (RGD) and 554–556 (RGD). Pro residues predominate over residues 600-613 (EGPPGPPGPGGPPG). VWFA domains are found at residues 638–825 (DLLF…LHNV) and 849–1035 (DITM…YQSI).

It belongs to the type VI collagen family.

The protein localises to the secreted. The protein resides in the extracellular space. It is found in the extracellular matrix. Functionally, collagen VI acts as a cell-binding protein. This Xenopus laevis (African clawed frog) protein is Collagen alpha-1(VI) chain (col6a1).